Consider the following 361-residue polypeptide: PTI1-like tyrosine-protein kinase 1 (361 aa).

Residues 16 to 43 are disordered; sequence EEQQLKSSQQQSDANHKNSKPAPVAKHE. In terms of domain architecture, Protein kinase spans 68–350; it reads FGSKALIGEG…IVVKALQPLL (283 aa). ATP-binding positions include 74-82 and lysine 96; that span reads IGEGSYGRV. Aspartate 200 serves as the catalytic Proton acceptor.

Belongs to the protein kinase superfamily. Tyr protein kinase family. Interacts with OXI1. In terms of processing, autophosphorylated and phosphorylated by OXI1.

The protein localises to the cell membrane. It catalyses the reaction L-tyrosyl-[protein] + ATP = O-phospho-L-tyrosyl-[protein] + ADP + H(+). This Arabidopsis thaliana (Mouse-ear cress) protein is PTI1-like tyrosine-protein kinase 1 (PTI11).